The sequence spans 238 residues: Orotidine 5'-phosphate decarboxylase (238 aa).

Residues aspartate 10, lysine 32, 59–68 (DLKLHDIPNT), threonine 122, arginine 184, glutamine 193, glycine 213, and arginine 214 each bind substrate. The Proton donor role is filled by lysine 61.

The protein belongs to the OMP decarboxylase family. Type 1 subfamily. As to quaternary structure, homodimer.

It carries out the reaction orotidine 5'-phosphate + H(+) = UMP + CO2. It participates in pyrimidine metabolism; UMP biosynthesis via de novo pathway; UMP from orotate: step 2/2. In terms of biological role, catalyzes the decarboxylation of orotidine 5'-monophosphate (OMP) to uridine 5'-monophosphate (UMP). In Bacillus cytotoxicus (strain DSM 22905 / CIP 110041 / 391-98 / NVH 391-98), this protein is Orotidine 5'-phosphate decarboxylase.